Consider the following 147-residue polypeptide: Arginine repressor (147 aa).

It belongs to the ArgR family.

The protein resides in the cytoplasm. The protein operates within amino-acid biosynthesis; L-arginine biosynthesis [regulation]. Regulates arginine biosynthesis genes. This Chlamydia caviae (strain ATCC VR-813 / DSM 19441 / 03DC25 / GPIC) (Chlamydophila caviae) protein is Arginine repressor.